We begin with the raw amino-acid sequence, 193 residues long: ATP-dependent protease subunit HslV (193 aa).

Residue T12 is part of the active site. Positions 167, 170, and 173 each coordinate Na(+).

It belongs to the peptidase T1B family. HslV subfamily. A double ring-shaped homohexamer of HslV is capped on each side by a ring-shaped HslU homohexamer. The assembly of the HslU/HslV complex is dependent on binding of ATP.

Its subcellular location is the cytoplasm. It carries out the reaction ATP-dependent cleavage of peptide bonds with broad specificity.. Allosterically activated by HslU binding. Protease subunit of a proteasome-like degradation complex believed to be a general protein degrading machinery. This is ATP-dependent protease subunit HslV from Bartonella quintana (strain Toulouse) (Rochalimaea quintana).